Here is a 101-residue protein sequence, read N- to C-terminus: NAD(P)H-quinone oxidoreductase subunit 4L, chloroplastic (101 aa).

Transmembrane regions (helical) follow at residues 2–22 (ILEH…YGLI), 32–52 (MCLE…SDFF), and 61–81 (IFSI…LAIV).

This sequence belongs to the complex I subunit 4L family. NDH is composed of at least 16 different subunits, 5 of which are encoded in the nucleus.

Its subcellular location is the plastid. It is found in the chloroplast thylakoid membrane. The enzyme catalyses a plastoquinone + NADH + (n+1) H(+)(in) = a plastoquinol + NAD(+) + n H(+)(out). It carries out the reaction a plastoquinone + NADPH + (n+1) H(+)(in) = a plastoquinol + NADP(+) + n H(+)(out). NDH shuttles electrons from NAD(P)H:plastoquinone, via FMN and iron-sulfur (Fe-S) centers, to quinones in the photosynthetic chain and possibly in a chloroplast respiratory chain. The immediate electron acceptor for the enzyme in this species is believed to be plastoquinone. Couples the redox reaction to proton translocation, and thus conserves the redox energy in a proton gradient. The polypeptide is NAD(P)H-quinone oxidoreductase subunit 4L, chloroplastic (Eucalyptus globulus subsp. globulus (Tasmanian blue gum)).